The chain runs to 93 residues: Small ribosomal subunit protein uS19 (93 aa).

The protein belongs to the universal ribosomal protein uS19 family.

In terms of biological role, protein S19 forms a complex with S13 that binds strongly to the 16S ribosomal RNA. The polypeptide is Small ribosomal subunit protein uS19 (rpsS) (Mycobacterium leprae (strain TN)).